The sequence spans 118 residues: Holo-[acyl-carrier-protein] synthase (118 aa).

The Mg(2+) site is built by D5 and E50.

The protein belongs to the P-Pant transferase superfamily. AcpS family. It depends on Mg(2+) as a cofactor.

The protein resides in the cytoplasm. It catalyses the reaction apo-[ACP] + CoA = holo-[ACP] + adenosine 3',5'-bisphosphate + H(+). In terms of biological role, transfers the 4'-phosphopantetheine moiety from coenzyme A to a Ser of acyl-carrier-protein. The protein is Holo-[acyl-carrier-protein] synthase of Wolinella succinogenes (strain ATCC 29543 / DSM 1740 / CCUG 13145 / JCM 31913 / LMG 7466 / NCTC 11488 / FDC 602W) (Vibrio succinogenes).